We begin with the raw amino-acid sequence, 344 residues long: Methionine import ATP-binding protein MetN (344 aa).

The ABC transporter domain occupies 7-245 (ISLKKISRCF…PQDDTTIAML (239 aa)). 42–49 (GRSGAGKS) is an ATP binding site.

Belongs to the ABC transporter superfamily. Methionine importer (TC 3.A.1.24) family. As to quaternary structure, the complex is composed of two ATP-binding proteins (MetN), two transmembrane proteins (MetI) and a solute-binding protein (MetQ).

It localises to the cell inner membrane. It catalyses the reaction L-methionine(out) + ATP + H2O = L-methionine(in) + ADP + phosphate + H(+). The catalysed reaction is D-methionine(out) + ATP + H2O = D-methionine(in) + ADP + phosphate + H(+). Part of the ABC transporter complex MetNIQ involved in methionine import. Responsible for energy coupling to the transport system. The sequence is that of Methionine import ATP-binding protein MetN from Bartonella henselae (strain ATCC 49882 / DSM 28221 / CCUG 30454 / Houston 1) (Rochalimaea henselae).